The chain runs to 332 residues: Adenosine receptor A2b (332 aa).

Residues 1-8 (MLLETQDA) are Extracellular-facing. The chain crosses the membrane as a helical span at residues 9–33 (LYVALELVIAALSVAGNVLVCAAVG). Residues 34-43 (TANTLQTPTN) lie on the Cytoplasmic side of the membrane. The helical transmembrane segment at 44–67 (YFLVSLAAADVAVGLFAIPFAITI) threads the bilayer. Residues 68–78 (SLGFCTDFYGC) are Extracellular-facing. Cysteines 78 and 171 form a disulfide. The helical transmembrane segment at 79 to 101 (LFLACFVLVLTQSSIFSLLAVAV) threads the bilayer. Residues 102-121 (DRYLAICVPLRYKSLVTGTR) are Cytoplasmic-facing. The helical transmembrane segment at 122–144 (ARGVIAVLWVLAFGIGLTPFLGW) threads the bilayer. Residues 145–178 (NSKDSATNNCTEPWDGTTNESCCLVKCLFENVVP) are Extracellular-facing. Residues asparagine 153 and asparagine 163 are each glycosylated (N-linked (GlcNAc...) asparagine). Glutamate 174 contributes to the adenosine binding site. The chain crosses the membrane as a helical span at residues 179 to 203 (MSYMVYFNFFGCVLPPLLIMLVIYI). The Cytoplasmic segment spans residues 204-235 (KIFLVACRQLQRTELMDHSRTTLQREIHAAKS). A helical transmembrane segment spans residues 236 to 259 (LAMIVGIFALCWLPVHAVNCVTLF). Position 254 (asparagine 254) interacts with adenosine. Residues 260–267 (QPAQGKNK) are Extracellular-facing. A helical membrane pass occupies residues 268-291 (PKWAMNMAILLSHANSVVNPIVYA). The adenosine site is built by serine 279 and histidine 280. The Cytoplasmic portion of the chain corresponds to 292–332 (YRNRDFRYTFHKIISRYLLCQADVKSGNGQAGVQPALGVGL). A lipid anchor (S-palmitoyl cysteine) is attached at cysteine 311.

The protein belongs to the G-protein coupled receptor 1 family.

It is found in the cell membrane. Its function is as follows. Receptor for adenosine. The activity of this receptor is mediated by G proteins which activate adenylyl cyclase. The polypeptide is Adenosine receptor A2b (ADORA2B) (Homo sapiens (Human)).